A 364-amino-acid polypeptide reads, in one-letter code: O-methyltransferase 1 (364 aa).

Residues S183, G207, D230, D250, and K264 each contribute to the S-adenosyl-L-homocysteine site. D230 is a binding site for S-adenosyl-L-methionine. H268 serves as the catalytic Proton acceptor.

The protein belongs to the class I-like SAM-binding methyltransferase superfamily. Cation-independent O-methyltransferase family. As to quaternary structure, homodimer.

It catalyses the reaction dopamine + S-adenosyl-L-methionine = 3-methoxytyramine + S-adenosyl-L-homocysteine + H(+). The enzyme catalyses 3,4-dihydroxy-5-methoxyphenethylamine + S-adenosyl-L-methionine = 4-hydroxy-3,5-dimethoxyphenethylamine + S-adenosyl-L-homocysteine + H(+). Its pathway is aromatic compound metabolism. The protein operates within alkaloid biosynthesis. Its function is as follows. O-methyltransferase participating in the biosynthesis of natural products derived from phenylethylamine, including mescaline, a natural hallucinogen potentially used in psychotherapeutic treatments. Catalyzes the O-methylation of mescaline meta hydroxyl groups, using dopamine and 3,4-dihydroxy-5-methoxyphenethylamine as substrates. The chain is O-methyltransferase 1 from Lophophora williamsii (Peyote).